The following is a 520-amino-acid chain: Sterile alpha motif domain-containing protein 3 (520 aa).

The SAM domain maps to 4-71; the sequence is WSVDQVCKWL…KYKQGNQELK (68 aa). A disordered region spans residues 67–104; that stretch reads NQELKPTGGPADTSTLTPAQAAPEHEQNPSPTSHGDQT. A compositionally biased stretch (polar residues) spans 94-104; it reads NPSPTSHGDQT.

In Mus musculus (Mouse), this protein is Sterile alpha motif domain-containing protein 3 (Samd3).